The sequence spans 352 residues: MLSLQTIAKMAVATNTYSKCHYPILKVFGLWWKNNTLNGPIKICNHCNNIMVGEYPMCYNHGMSLDIALIRAVKERNISLVQLFTEWGGNIDYGALCANTPSMQRLCKSLGAKPPKGRMYMDALIHLSDTLNDNDLIRGYEIFDDNSVLDCVNLIRLKIMLTLKARIPLMEQLDQIALKQLLQRYWYAMAVQHNLTTAIHYFNNHIPNIKPFGLRCALYFNDPFKIHDACRTVNMDPNEMMNIACQQDLNFQSIYYCYLLGADINQAMLMSLKYGHLSNMWFCIDLGADAFKEAGVLAEKKNRRVLQHILGLNIFKRELIPPCKDPDPYQIQILLKNYILKNVSTVFTYYCQ.

Belongs to the asfivirus MGF 360 family.

Plays a role in virus cell tropism, and may be required for efficient virus replication in macrophages. The polypeptide is Protein MGF 360-16R (African swine fever virus (isolate Warthog/Namibia/Wart80/1980) (ASFV)).